Reading from the N-terminus, the 483-residue chain is Serralysin (483 aa).

Zn(2+) is bound at residue H184. Residue E185 is part of the active site. Zn(2+) contacts are provided by H188 and H194. 8 residues coordinate Ca(2+): R263, D266, D295, G297, G298, D300, T337, and E339. 2 Hemolysin-type calcium-binding repeats span residues 342–359 (IGGSGNDILIGNDAENIL) and 360–377 (KGGAGDDIIYGGLGADQL).

The protein belongs to the peptidase M10B family. Zn(2+) is required as a cofactor. Ca(2+) serves as cofactor.

The protein localises to the secreted. The enzyme catalyses Preferential cleavage of bonds with hydrophobic residues in P1'.. Inhibited by 8 mM 1,10-phenanthroline and 10 mM EDTA, but not by PMSF. Functionally, involved in the inhibition of insect antibacterial peptides. Reduces the antibacterial activity of G.mellonella hemolymph by 50%. Reduces the antibacterial activity of cecropin A by 80% and cecropin B by 75%. This is Serralysin from Photorhabdus sp. (strain Az29).